A 104-amino-acid chain; its full sequence is Large ribosomal subunit protein bL28 (104 aa).

This sequence belongs to the bacterial ribosomal protein bL28 family.

This chain is Large ribosomal subunit protein bL28, found in Wolbachia sp. subsp. Brugia malayi (strain TRS).